A 528-amino-acid polypeptide reads, in one-letter code: Importin subunit alpha-7 (528 aa).

In terms of domain architecture, IBB spans M1–S56. ARM repeat units lie at residues N93–S133, S136–G175, P178–R218, K220–D259, N262–T301, D304–A344, Q347–A386, and Y390–K429.

The protein belongs to the importin alpha family. In terms of assembly, forms a complex with importin subunit beta-1.

Its subcellular location is the nucleus envelope. In terms of biological role, binds to conventional NLS motifs and mediates nuclear protein import across the nuclear envelope. Acts as a cellular receptor for the nuclear import of the virD2 protein of Agrobacterium, but is not essential for Agrobacterium-mediated root transformation. This Arabidopsis thaliana (Mouse-ear cress) protein is Importin subunit alpha-7.